The chain runs to 282 residues: MQTLKSQRAMPTATPSDQKTTAFLTIENVSKVYPTAKGPYTVLENVNLTVNEGEFICVIGHSGCGKSTLLNMVSGFASPTDGSVQVGGKIITEPGPDRMVVFQNYALLPWLTALENVYIAVDAVHSQKTEAEKRAIAKDHLAMVGLTDSMDKKPGQISGGMKQRVSIARALAIRPEVLILDEPFGALDAITKEELQEELLQIWNDHRCTVLMITHDIDEALFLADRLVMMTNGPHANIGEIMTIPFSRPRDRDRIMEDPTYYQLRNYALDFLYNRFAHDDVA.

The ABC transporter domain maps to 24 to 257 (LTIENVSKVY…RPRDRDRIME (234 aa)). Residue 60–67 (GHSGCGKS) coordinates ATP.

It belongs to the ABC transporter superfamily. Nitrate/nitrite/cyanate uptake transporter (NitT) (TC 3.A.1.16) family. The complex is composed of two ATP-binding proteins (CmpC and CmpD), a transmembrane protein (CmpB) and a solute-binding protein (CmpA).

It localises to the cell inner membrane. Functionally, part of the ABC transporter complex CmpABCD involved in bicarbonate transport. Responsible for energy coupling to the transport system. This chain is Bicarbonate transport ATP-binding protein CmpD (cmpD), found in Synechocystis sp. (strain ATCC 27184 / PCC 6803 / Kazusa).